A 487-amino-acid chain; its full sequence is Probable Xaa-Pro aminopeptidase AFUB_014460 (487 aa).

Mn(2+)-binding residues include D267, D278, E416, and E455.

The protein belongs to the peptidase M24B family. Requires Mn(2+) as cofactor.

It catalyses the reaction Release of any N-terminal amino acid, including proline, that is linked to proline, even from a dipeptide or tripeptide.. Its function is as follows. Catalyzes the removal of a penultimate prolyl residue from the N-termini of peptides. The polypeptide is Probable Xaa-Pro aminopeptidase AFUB_014460 (Aspergillus fumigatus (strain CBS 144.89 / FGSC A1163 / CEA10) (Neosartorya fumigata)).